Reading from the N-terminus, the 478-residue chain is Calcium/calmodulin-dependent protein kinase type II subunit alpha (478 aa).

Y13 carries the phosphotyrosine modification. Residues 13 to 271 form the Protein kinase domain; sequence YQLFEELGKG…AAEALKHPWI (259 aa). ATP-binding positions include 19–27 and K42; that span reads LGKGAFSVV. D135 (proton acceptor) is an active-site residue. Phosphoserine is present on S257. Residue T286 is modified to Phosphothreonine; by autocatalysis. The interval 290–300 is calmodulin-binding; the sequence is LKKFNARRKLK. The segment at 310–320 is interaction with BAALC; the sequence is TRNFSGGKSGG. The segment at 314 to 341 is disordered; sequence SGGKSGGNKKSDGVKESSESTNTTIEDE. A compositionally biased stretch (basic and acidic residues) spans 322–331; it reads KKSDGVKESS. Phosphoserine occurs at positions 330, 331, and 333. T336 and T337 each carry phosphothreonine. S404 is modified (phosphoserine).

Belongs to the protein kinase superfamily. CAMK Ser/Thr protein kinase family. CaMK subfamily. In terms of assembly, there are 4 genes encoding calcium/calmodulin-dependent protein kinase type II chains: CAMK2A, CAMK2B, CAMK2G and CAMK2D. The corresponding proteins assemble into homo- or heteromultimeric holoenzymes composed of 12 subunits with two hexameric rings stacked one on top of the other. Interacts with BAALC. Interacts with MPDZ. Interacts with SYN1. Interacts with CAMK2N2. Interacts with SYNGAP1. Interacts with SYNPO2. Interacts with SHANK3. Interacts with GRIN2B. Interacts with CACNB2. Interacts with LRRC7. Interacts with GRM5. Interacts with DAGLA (via C-terminal); this interaction is enhanced by autophosphorylation of CAMK2A at Thr-286. Interacts with CAMK2N1; this interaction requires CAMK2A activation by Ca(2+). It depends on Mg(2+) as a cofactor. Autophosphorylation of Thr-286 following activation by Ca(2+)/calmodulin. Phosphorylation of Thr-286 locks the kinase into an activated state. Post-translationally, palmitoylated. Probably palmitoylated by ZDHHC3 and ZDHHC7.

It localises to the synapse. Its subcellular location is the postsynaptic density. It is found in the cell projection. The protein localises to the dendritic spine. The protein resides in the dendrite. The catalysed reaction is L-seryl-[protein] + ATP = O-phospho-L-seryl-[protein] + ADP + H(+). It catalyses the reaction L-threonyl-[protein] + ATP = O-phospho-L-threonyl-[protein] + ADP + H(+). With respect to regulation, activated by Ca(2+)/calmodulin. Binding of calmodulin results in conformational change that relieves intrasteric autoinhibition and allows autophosphorylation of Thr-286 which turns the kinase in a constitutively active form and confers to the kinase a Ca(2+)-independent activity. Its function is as follows. Calcium/calmodulin-dependent protein kinase that functions autonomously after Ca(2+)/calmodulin-binding and autophosphorylation, and is involved in various processes, such as synaptic plasticity, neurotransmitter release and long-term potentiation. Member of the NMDAR signaling complex in excitatory synapses, it regulates NMDAR-dependent potentiation of the AMPAR and therefore excitatory synaptic transmission. Regulates dendritic spine development. Also regulates the migration of developing neurons. Phosphorylates the transcription factor FOXO3 to activate its transcriptional activity. Phosphorylates the transcription factor ETS1 in response to calcium signaling, thereby decreasing ETS1 affinity for DNA. In response to interferon-gamma (IFN-gamma) stimulation, catalyzes phosphorylation of STAT1, stimulating the JAK-STAT signaling pathway. In response to interferon-beta (IFN-beta) stimulation, stimulates the JAK-STAT signaling pathway. Acts as a negative regulator of 2-arachidonoylglycerol (2-AG)-mediated synaptic signaling via modulation of DAGLA activity. The sequence is that of Calcium/calmodulin-dependent protein kinase type II subunit alpha (CAMK2A) from Pongo abelii (Sumatran orangutan).